Here is a 266-residue protein sequence, read N- to C-terminus: Undecaprenyl-diphosphatase 3 (266 aa).

Helical transmembrane passes span 4–24 (IEAF…FLPI), 43–63 (SGRA…CWLY), 86–106 (FSVL…VDFI), 109–129 (VLFS…IIFW), 145–165 (ITFK…IPGT), 186–206 (TEFS…YDLL), 219–239 (NIGL…KALV), and 246–266 (TLRV…FVML).

This sequence belongs to the UppP family.

It localises to the cell inner membrane. It carries out the reaction di-trans,octa-cis-undecaprenyl diphosphate + H2O = di-trans,octa-cis-undecaprenyl phosphate + phosphate + H(+). Its function is as follows. Catalyzes the dephosphorylation of undecaprenyl diphosphate (UPP). Confers resistance to bacitracin. The polypeptide is Undecaprenyl-diphosphatase 3 (Acinetobacter baylyi (strain ATCC 33305 / BD413 / ADP1)).